A 132-amino-acid chain; its full sequence is Auxin-responsive protein SAUR72 (132 aa).

The segment at 22–54 (SDSQRPSRRSESFLRSSVTRRSKKQTSSVPEGH) is disordered. The span at 23-33 (DSQRPSRRSES) shows a compositional bias: basic and acidic residues.

Belongs to the ARG7 family. Interacts with and inhibits PP2C-D subfamily of type 2C phosphatases such as PP2C67/PP2C-D1. In terms of tissue distribution, highly expressed in the steles of roots and hypocotyls.

It localises to the cytoplasm. Provide a mechanistic link between auxin and plasma membrane H(+)-ATPases (PM H(+)-ATPases, e.g. AHA1 and AHA2), and triggers PM H(+)-ATPases activity by promoting phosphorylation of their C-terminal autoinhibitory domain as a result of PP2C-D subfamily of type 2C phosphatases inhibition, thus leading to the acidification of the apoplast and the facilitation of solutes and water uptake to drive cell expansion. Plays a role in the regulation of cell expansion, root meristem patterning and auxin transport. This is Auxin-responsive protein SAUR72 from Arabidopsis thaliana (Mouse-ear cress).